The sequence spans 146 residues: Neuropeptide Y receptor type 2 (146 aa).

Topologically, residues 1–8 (KMGPVLCH) are extracellular. The cysteines at positions 7 and 87 are disulfide-linked. A helical transmembrane segment spans residues 9–29 (LVPYAQGLAVQVSTITLTVIA). Residues 30–49 (LDRHRCIVYHLESKISKQIS) lie on the Cytoplasmic side of the membrane. A helical transmembrane segment spans residues 50–70 (FLIIGLAWGVSALLASPLAIF). At 71-100 (REYSLIEIIPDFEIVACTEKWPGEEKGIYG) the chain is on the extracellular side. The helical transmembrane segment at 101–121 (TVYSLLSLLILYVLPLGIISF) threads the bilayer. The Cytoplasmic portion of the chain corresponds to 122-146 (SYARIWSKLKNHVSPGAAHDHYHQR).

This sequence belongs to the G-protein coupled receptor 1 family.

It localises to the cell membrane. Functionally, receptor for neuropeptide Y and peptide YY. This Ovis aries (Sheep) protein is Neuropeptide Y receptor type 2 (NPY2R).